The sequence spans 257 residues: tRNA pseudouridine synthase A (257 aa).

Catalysis depends on D53, which acts as the Nucleophile. Position 111 (Y111) interacts with substrate.

Belongs to the tRNA pseudouridine synthase TruA family. In terms of assembly, homodimer.

The enzyme catalyses uridine(38/39/40) in tRNA = pseudouridine(38/39/40) in tRNA. Functionally, formation of pseudouridine at positions 38, 39 and 40 in the anticodon stem and loop of transfer RNAs. The chain is tRNA pseudouridine synthase A from Xanthomonas euvesicatoria pv. vesicatoria (strain 85-10) (Xanthomonas campestris pv. vesicatoria).